The sequence spans 148 residues: Large ribosomal subunit protein bL9 (148 aa).

The protein belongs to the bacterial ribosomal protein bL9 family.

Functionally, binds to the 23S rRNA. This Listeria monocytogenes serotype 4b (strain CLIP80459) protein is Large ribosomal subunit protein bL9.